Consider the following 1776-residue polypeptide: Signal-induced proliferation-associated 1-like protein 3 (1776 aa).

Disordered regions lie at residues 41-157 (AQNG…GRAF) and 240-325 (PGAL…EASR). Residues 54-69 (PAATTTRPSPTTPAMP) are compositionally biased toward low complexity. Composition is skewed to polar residues over residues 89–99 (EQSNPSPSQDT) and 112–129 (RNLQNGQLPSSTPASSGS). At serine 94 the chain carries Phosphoserine. Residues 131–140 (AFHRLSRRRS) are compositionally biased toward basic residues. Serine 140 is modified (phosphoserine). Over residues 257-268 (GQPTKDSLQSLQ) the composition is skewed to polar residues. At serine 394 the chain carries Phosphoserine. The interval 438–461 (SRASVGSPGGSSEAHMAEPTLSTH) is disordered. Residues 605 to 822 (LLKLDEQGLC…RTRQEYLKDL (218 aa)) enclose the Rap-GAP domain. A PDZ domain is found at 960–1024 (DMTLRRNGLG…DQMIDLLRTS (65 aa)). Disordered stretches follow at residues 1040–1104 (PRRG…AQSL), 1117–1164 (RESQ…ATYA), and 1184–1632 (DPHF…LDPG). 2 stretches are compositionally biased toward polar residues: residues 1074-1104 (APWQWSGPASHNSLPATKWTTPATPGHAQSL) and 1151-1160 (PSGSFSTPGS). The segment covering 1190–1201 (DGMSSGDSSSGG) has biased composition (low complexity). Over residues 1239 to 1255 (SRQDAAGKDSPNRHSKG) the composition is skewed to basic and acidic residues. The segment covering 1260–1275 (SSHSSSNTLSSNASSS) has biased composition (low complexity). Over residues 1298-1316 (GGSSDSGIDTTLYTSSPSC) the composition is skewed to polar residues. Residues 1344–1357 (SAGRPHPVDRRREV) are compositionally biased toward basic and acidic residues. Serine 1358 is subject to Phosphoserine. The residue at position 1381 (threonine 1381) is a Phosphothreonine. Residues 1409–1436 (VYKTASAETPRPSQLSQCSPFQLSTSVP) are compositionally biased toward polar residues. An N6-acetyllysine modification is found at lysine 1442. The segment covering 1503–1512 (TIEDDLKKLI) has biased composition (basic and acidic residues). Polar residues-rich tracts occupy residues 1526-1541 (GQSPQKSLQRTLSDES) and 1566-1578 (LFTSTCTFPSSTL). 2 positions are modified to phosphoserine: serine 1538 and serine 1541. Residues 1589–1601 (PPSGAPSTTPATG) are compositionally biased toward low complexity. 2 positions are modified to phosphoserine: serine 1614 and serine 1617. The span at 1620-1630 (DGRDRPLRRLD) shows a compositional bias: basic and acidic residues. Serine 1672 carries the post-translational modification Phosphoserine. A disordered region spans residues 1678 to 1705 (AHSPVHSHLSLERGPQTPRATPTMSEES). Residues threonine 1694 and threonine 1698 each carry the phosphothreonine modification. A coiled-coil region spans residues 1715-1769 (QLEVMLKQLHTDLQKEKQDKVVLQSEVASLRQNNQRLQEESQAASEQLRKFAELF).

The protein resides in the apical cell membrane. Functionally, plays a critical role in epithelial cell morphogenesis, polarity, adhesion and cytoskeletal organization in the lens. In Mus musculus (Mouse), this protein is Signal-induced proliferation-associated 1-like protein 3 (Sipa1l3).